We begin with the raw amino-acid sequence, 403 residues long: RILP-like protein 1 (403 aa).

At Ser7 the chain carries Phosphoserine. The region spanning 10–97 is the RH1 domain; the sequence is AAESALEKNV…RLERMDRIEK (88 aa). Cys47 is subject to S-nitrosocysteine. Residues 76 to 258 adopt a coiled-coil conformation; that stretch reads ELDELRLELD…KLRERLQGEH (183 aa). 3 disordered regions span residues 254-275, 327-352, and 384-403; these read LQGEHSQNGEEEPETEPVGEES, EMEEENRIPQPPPIAHPRTSPQPESG, and ANTHRDDGYTEQGQEALQHL. Ser259 bears the Phosphoserine mark. A compositionally biased stretch (acidic residues) spans 262 to 275; it reads GEEEPETEPVGEES. In terms of domain architecture, RH2 spans 291 to 356; sequence RPRFTLQELR…PQPESGIKRL (66 aa). Residues 394 to 403 show a composition bias toward polar residues; the sequence is EQGQEALQHL.

Belongs to the RILPL family. In terms of assembly, interacts (when S-nitrosylated) with GAPDH. Interacts with RAB8A; interaction is dependent on the phosphorylation of 'Thr-72' of RAB8A. Interacts with RAB10 and RAB12; the interaction is dependent on the phosphorylation of 'Thr-73' of RAB10, and 'Ser-105' of RAB12. In terms of processing, S-nitrosylation is required for the interaction with GAPDH. In terms of tissue distribution, widely expressed. Expressed at lower level in liver and kidney.

It is found in the cytoplasm. The protein localises to the cytosol. Its subcellular location is the cytoskeleton. The protein resides in the microtubule organizing center. It localises to the centrosome. It is found in the centriole. The protein localises to the cilium basal body. In terms of biological role, plays a role in the regulation of cell shape and polarity. Plays a role in cellular protein transport, including protein transport away from primary cilia. Neuroprotective protein, which acts by sequestring GAPDH in the cytosol and prevent the apoptotic function of GAPDH in the nucleus. Competes with SIAH1 for binding GAPDH. Does not regulate lysosomal morphology and distribution. Binds to RAB10 following LRRK2-mediated RAB10 phosphorylation which leads to inhibition of ciliogenesis. The protein is RILP-like protein 1 (RILPL1) of Homo sapiens (Human).